The sequence spans 516 residues: Protein BTN1 (516 aa).

The next 8 membrane-spanning stretches (helical) occupy residues 24–44, 57–77, 88–108, 112–132, 146–166, 169–189, 371–391, and 409–429; these read LFAA…IILS, GVVA…WPLL, VGFC…SSSL, LLGI…FLQL, LGAW…IWWL, GLGV…FPIT, PAII…TFFF, and SITI…SGYV.

This sequence belongs to the battenin family.

Its subcellular location is the vacuole membrane. Functionally, involved in vacuolar transport and vacuole pH homeostasis. Also required for cytokinesis. In Cryptococcus neoformans var. neoformans serotype D (strain JEC21 / ATCC MYA-565) (Filobasidiella neoformans), this protein is Protein BTN1 (BTN1).